A 351-amino-acid chain; its full sequence is Methylxanthine N1-demethylase NdmA (351 aa).

Positions 17–125 constitute a Rieske domain; sequence WHPVCTVTEL…CEERYGLIWI (109 aa). Residues C62, H64, C81, and H84 each contribute to the [2Fe-2S] cluster site.

Requires [2Fe-2S] cluster as cofactor.

The catalysed reaction is caffeine + NADH + O2 + H(+) = theobromine + formaldehyde + NAD(+) + H2O. It catalyses the reaction caffeine + NADPH + O2 + H(+) = theobromine + formaldehyde + NADP(+) + H2O. The enzyme catalyses theophylline + NADH + O2 + H(+) = 3-methylxanthine + formaldehyde + NAD(+) + H2O. It carries out the reaction theophylline + NADPH + O2 + H(+) = 3-methylxanthine + formaldehyde + NADP(+) + H2O. The catalysed reaction is 1,7-dimethylxanthine + NADH + O2 + H(+) = 7-methylxanthine + formaldehyde + NAD(+) + H2O. It catalyses the reaction 1,7-dimethylxanthine + NADPH + O2 + H(+) = 7-methylxanthine + formaldehyde + NADP(+) + H2O. It participates in alkaloid degradation. Functionally, involved in the caffeine degradation, which is the essential first step for assimilating the carbon and nitrogen in caffeine. Catalyzes the N1-demethylation of caffeine to produce theobromine and formaldehyde. Also catalyzes the N1-demethylation of theophylline, paraxanthine, and 1-methylxanthine to 3-methylxanthine, 7-methylxanthine, and xanthine, respectively. NADH is the preferred substrate. This Pseudomonas putida (Arthrobacter siderocapsulatus) protein is Methylxanthine N1-demethylase NdmA (ndmA).